Here is a 170-residue protein sequence, read N- to C-terminus: Small ribosomal subunit protein uS5 (170 aa).

The 64-residue stretch at 13 to 76 (LLEKLVGVRR…ENARKNMISV (64 aa)) folds into the S5 DRBM domain.

It belongs to the universal ribosomal protein uS5 family. In terms of assembly, part of the 30S ribosomal subunit. Contacts proteins S4 and S8.

With S4 and S12 plays an important role in translational accuracy. Functionally, located at the back of the 30S subunit body where it stabilizes the conformation of the head with respect to the body. This Nitrosococcus oceani (strain ATCC 19707 / BCRC 17464 / JCM 30415 / NCIMB 11848 / C-107) protein is Small ribosomal subunit protein uS5.